Reading from the N-terminus, the 95-residue chain is Nodulin (95 aa).

In Striga hermonthica (Purple witchweed), this protein is Nodulin.